Here is a 140-residue protein sequence, read N- to C-terminus: Methylglyoxal synthase (140 aa).

The region spanning 1–140 (MNIALIAHDE…KERQEKEGTP (140 aa)) is the MGS-like domain. Substrate is bound by residues His-8, Lys-12, 34–37 (TGTT), and 54–55 (SG). Asp-60 (proton donor/acceptor) is an active-site residue. His-87 is a binding site for substrate.

The protein belongs to the methylglyoxal synthase family.

The enzyme catalyses dihydroxyacetone phosphate = methylglyoxal + phosphate. Catalyzes the formation of methylglyoxal from dihydroxyacetone phosphate. This Oceanobacillus iheyensis (strain DSM 14371 / CIP 107618 / JCM 11309 / KCTC 3954 / HTE831) protein is Methylglyoxal synthase.